Here is an 853-residue protein sequence, read N- to C-terminus: A-kinase anchor protein 3 (853 aa).

The interval 124–137 is PKA-RII subunit binding domain; sequence VSFYANRLTNLVIA. Residues 188–240 form a disordered region; that stretch reads RNAAPDKAPGSGDRVSGSSQSPPNLKYKSTLKIKESTKERQGPDDKPPSKKSF. Phosphoserine occurs at positions 205 and 208. Residues 219–235 are compositionally biased toward basic and acidic residues; it reads KIKESTKERQGPDDKPP. Phosphoserine is present on Ser403. At Tyr404 the chain carries Phosphotyrosine. A phosphoserine mark is found at Ser635 and Ser636.

Belongs to the AKAP110 family. Interacts with ROPN1 and ROPN1L. Interacts with QRICH2. Post-translationally, phosphorylated by STK33 during sperm flagella assembly. Phosphorylated on tyrosine residues. Testis specific; only expressed in spermatids.

It localises to the cytoplasmic vesicle. It is found in the secretory vesicle. The protein resides in the acrosome. Its subcellular location is the cell projection. The protein localises to the cilium. It localises to the flagellum. Structural component of sperm fibrous sheath. Required for the formation of the subcellular structure of the sperm flagellum, sperm motility and male fertility. This is A-kinase anchor protein 3 from Homo sapiens (Human).